Consider the following 364-residue polypeptide: DNA polymerase IV (364 aa).

Residues 6–186 (IIHIDMDAFY…LPIESFWGVG (181 aa)) enclose the UmuC domain. Residues Asp-10 and Asp-104 each coordinate Mg(2+). The active site involves Glu-105.

Belongs to the DNA polymerase type-Y family. Monomer. Mg(2+) serves as cofactor.

The protein resides in the cytoplasm. The catalysed reaction is DNA(n) + a 2'-deoxyribonucleoside 5'-triphosphate = DNA(n+1) + diphosphate. In terms of biological role, poorly processive, error-prone DNA polymerase involved in untargeted mutagenesis. Copies undamaged DNA at stalled replication forks, which arise in vivo from mismatched or misaligned primer ends. These misaligned primers can be extended by PolIV. Exhibits no 3'-5' exonuclease (proofreading) activity. May be involved in translesional synthesis, in conjunction with the beta clamp from PolIII. In Bacteroides fragilis (strain YCH46), this protein is DNA polymerase IV.